A 210-amino-acid polypeptide reads, in one-letter code: Outer surface protein C (210 aa).

Positions 1–18 (MKKNTLSAILMTLFLFIS) are cleaved as a signal peptide. C19 carries N-palmitoyl cysteine lipidation. A lipid anchor (S-diacylglycerol cysteine) is attached at C19.

It belongs to the OspC lipoprotein family. As to quaternary structure, homodimer. Binds human plasminogen on the bacterial surface, also binds human plasmin. Interacts with tick I.ricinus salivary protein Iric-1. Interacts with human complement C4 beta chain (C4B); whole bacteria bind to wells coated with C4b. Binding is inhibited by human complement factor C2.

The protein localises to the cell outer membrane. The protein resides in the cell surface. Its function is as follows. A major immunodominant protein in mammalian hosts. Required for the initial stages of mammalian infection. Interaction with tick I.ricinus salivary protein Salp15 protects the bacteria from antibody-mediated killing in vitro and in vivo. Inhibits macrophage-mediated phagocytosis of the bacteria. Binds human plasminogen; this probably confers an extracellular protease activity on the bacteria that allows it to traverse tissue. Binds human complement C4-B, which may inhibit the complement cascade. Experiments in mice suggest it may play another role after initial infection. In Borreliella burgdorferi (strain ATCC 35210 / DSM 4680 / CIP 102532 / B31) (Borrelia burgdorferi), this protein is Outer surface protein C.